Reading from the N-terminus, the 558-residue chain is Ankyrin repeat protein OPG189 (558 aa).

ANK repeat units follow at residues 65–95, 169–205, 209–239, 243–272, 276–304, 339–368, and 372–401; these read YGEN…NINK, YGCT…DVDK, HGNT…NIDS, NGYT…NVNT, FGTT…ELEI, YNET…DFET, and SGCT…SLKI.

The protein belongs to the orthopoxvirus OPG189 protein family.

Contributes to viral release without involving rearrangement of host actin. The polypeptide is Ankyrin repeat protein OPG189 (OPG189) (Homo sapiens (Human)).